The following is a 309-amino-acid chain: Cytochrome c biogenesis protein CcsA (309 aa).

Transmembrane regions (helical) follow at residues Leu-18–Phe-38, Phe-43–Phe-63, Ile-67–Ile-87, Ile-102–Leu-122, Val-148–Ile-168, Ser-216–Asn-236, Thr-250–Ile-267, and Leu-279–Ile-299.

It belongs to the CcmF/CycK/Ccl1/NrfE/CcsA family. In terms of assembly, may interact with ccs1.

It localises to the cellular thylakoid membrane. Functionally, required during biogenesis of c-type cytochromes (cytochrome c6 and cytochrome f) at the step of heme attachment. This chain is Cytochrome c biogenesis protein CcsA, found in Prochlorococcus marinus (strain MIT 9215).